Reading from the N-terminus, the 158-residue chain is MDPNPRAALERQQLRLRERQKFFEDILQPETEFVFPLSHLHLESQRPPIGSISSMEVNVDTLEQVEFIDLADQDGADVFLPCEESSPAPQMSGVDDHPEELSLLVPTSDRTTSRTSSLSSDSSNLRSPNPSDGGGDTPLAQSDEEDGDDGGAEPGPCS.

Positions 79-158 are disordered; it reads FLPCEESSPA…DGGAEPGPCS (80 aa). Residues 106–131 show a composition bias toward low complexity; it reads PTSDRTTSRTSSLSSDSSNLRSPNPS. Serine 119 and serine 120 each carry phosphoserine. The residue at position 137 (threonine 137) is a Phosphothreonine. Serine 142 carries the post-translational modification Phosphoserine. The span at 142 to 151 shows a compositional bias: acidic residues; sequence SDEEDGDDGG.

The protein belongs to the dysbindin family. As to quaternary structure, monomer. Interacts with CSNK1D and CSNK1E.

May modulate the activity of casein kinase-1. Inhibits CSNK1D autophosphorylation (in vitro). This chain is Dysbindin domain-containing protein 2 (Dbndd2), found in Mus musculus (Mouse).